The following is a 45-amino-acid chain: Mu-conotoxin-like Cal 12.1.2c (45 aa).

Intrachain disulfides connect C3-C16, C11-C28, C18-C33, and C27-C39. P23 bears the 4-hydroxyproline mark. W37 and W38 each carry 6'-bromotryptophan. P40 is modified (4-hydroxyproline). The residue at position 44 (W44) is a 6'-bromotryptophan.

As to expression, expressed by the venom duct.

The protein resides in the secreted. In terms of biological role, mu-conotoxins block voltage-gated sodium channels. This toxin reversibly blocks voltage-gated sodium channel in cephalopods, with no alteration in the voltage dependence of sodium conductance or on the kinetics of inactivation. This chain is Mu-conotoxin-like Cal 12.1.2c, found in Californiconus californicus (California cone).